Consider the following 476-residue polypeptide: ATP synthase subunit beta (476 aa).

Gly-161–Thr-168 is a binding site for ATP.

The protein belongs to the ATPase alpha/beta chains family. As to quaternary structure, F-type ATPases have 2 components, CF(1) - the catalytic core - and CF(0) - the membrane proton channel. CF(1) has five subunits: alpha(3), beta(3), gamma(1), delta(1), epsilon(1). CF(0) has three main subunits: a(1), b(2) and c(9-12). The alpha and beta chains form an alternating ring which encloses part of the gamma chain. CF(1) is attached to CF(0) by a central stalk formed by the gamma and epsilon chains, while a peripheral stalk is formed by the delta and b chains.

The protein localises to the cell membrane. The enzyme catalyses ATP + H2O + 4 H(+)(in) = ADP + phosphate + 5 H(+)(out). Produces ATP from ADP in the presence of a proton gradient across the membrane. The catalytic sites are hosted primarily by the beta subunits. This Mycolicibacterium gilvum (strain PYR-GCK) (Mycobacterium gilvum (strain PYR-GCK)) protein is ATP synthase subunit beta.